The primary structure comprises 299 residues: MKKLGTDLLKRGFAKMVKHGVVMDVTNVEQAQIAEDAGAAAVMALERVPADIRVQGGVARMSDPEMILEIKDAVSIPVMAKARIGHFVEAQLLESIGVDMVDESEVLTPADEVNHIDKRAFTAPFVCGARNLGEALRRIDEGAAMIRTKGEAGTGNVVEAVKHMRAVNEGIARVVGYKEMGLEAELIQMARNELKVPMELISEVAELKRLPVVNFAAGGIATPADAALMMQMGCDGVFVGSGIFKSGNPATRAKAIVEATYNFDKPAVIGEVSKNLGEAMVGINIDEIPEEKLLAKRGI.

Asp-24 contributes to the D-ribose 5-phosphate binding site. Lys-81 functions as the Schiff-base intermediate with D-ribose 5-phosphate in the catalytic mechanism. Gly-153 provides a ligand contact to D-ribose 5-phosphate. Arg-165 is a D-glyceraldehyde 3-phosphate binding site. D-ribose 5-phosphate-binding positions include Gly-219 and Gly-240–Ser-241.

Belongs to the PdxS/SNZ family. As to quaternary structure, in the presence of PdxT, forms a dodecamer of heterodimers.

The catalysed reaction is aldehydo-D-ribose 5-phosphate + D-glyceraldehyde 3-phosphate + L-glutamine = pyridoxal 5'-phosphate + L-glutamate + phosphate + 3 H2O + H(+). The protein operates within cofactor biosynthesis; pyridoxal 5'-phosphate biosynthesis. Its function is as follows. Catalyzes the formation of pyridoxal 5'-phosphate from ribose 5-phosphate (RBP), glyceraldehyde 3-phosphate (G3P) and ammonia. The ammonia is provided by the PdxT subunit. Can also use ribulose 5-phosphate and dihydroxyacetone phosphate as substrates, resulting from enzyme-catalyzed isomerization of RBP and G3P, respectively. This is Pyridoxal 5'-phosphate synthase subunit PdxS from Methanococcus maripaludis (strain C6 / ATCC BAA-1332).